Consider the following 697-residue polypeptide: Polyribonucleotide nucleotidyltransferase (697 aa).

2 residues coordinate Mg(2+): aspartate 488 and aspartate 494. One can recognise a KH domain in the interval 555 to 614 (PTFEVITINPDKIRDVIGKGGATIRQITEETKAAIDIEDNGTVRVFGETKAAARAAIAKI). The 69-residue stretch at 624 to 692 (GKIYDGKVIR…NRGRIKLSMK (69 aa)) folds into the S1 motif domain.

It belongs to the polyribonucleotide nucleotidyltransferase family. As to quaternary structure, component of the RNA degradosome, which is a multiprotein complex involved in RNA processing and mRNA degradation. Mg(2+) is required as a cofactor.

It localises to the cytoplasm. It catalyses the reaction RNA(n+1) + phosphate = RNA(n) + a ribonucleoside 5'-diphosphate. Functionally, involved in mRNA degradation. Catalyzes the phosphorolysis of single-stranded polyribonucleotides processively in the 3'- to 5'-direction. This is Polyribonucleotide nucleotidyltransferase from Acinetobacter baylyi (strain ATCC 33305 / BD413 / ADP1).